The following is a 427-amino-acid chain: 3-phosphoshikimate 1-carboxyvinyltransferase (427 aa).

Residues K27, S28, and R32 each coordinate 3-phosphoshikimate. K27 provides a ligand contact to phosphoenolpyruvate. Positions 95 and 123 each coordinate phosphoenolpyruvate. 3-phosphoshikimate is bound by residues S166, S167, Q168, S192, D305, and K332. Phosphoenolpyruvate is bound at residue Q168. The active-site Proton acceptor is D305. Phosphoenolpyruvate-binding residues include R336 and R377.

This sequence belongs to the EPSP synthase family. In terms of assembly, monomer.

Its subcellular location is the cytoplasm. It carries out the reaction 3-phosphoshikimate + phosphoenolpyruvate = 5-O-(1-carboxyvinyl)-3-phosphoshikimate + phosphate. The protein operates within metabolic intermediate biosynthesis; chorismate biosynthesis. Its function is as follows. Catalyzes the transfer of the enolpyruvyl moiety of phosphoenolpyruvate (PEP) to the 5-hydroxyl of shikimate-3-phosphate (S3P) to produce enolpyruvyl shikimate-3-phosphate and inorganic phosphate. In Aeropyrum pernix (strain ATCC 700893 / DSM 11879 / JCM 9820 / NBRC 100138 / K1), this protein is 3-phosphoshikimate 1-carboxyvinyltransferase.